The sequence spans 479 residues: 6-phosphogluconate dehydrogenase, decarboxylating (479 aa).

NADP(+) contacts are provided by residues 9-14 (GLAVMG), 32-34 (NRT), 74-76 (IQA), and asparagine 102. Residues asparagine 102 and 128–130 (SGG) each bind substrate. Lysine 182 functions as the Proton acceptor in the catalytic mechanism. 185 to 186 (HN) serves as a coordination point for substrate. The active-site Proton donor is the glutamate 189. The substrate site is built by tyrosine 190, lysine 259, arginine 286, arginine 446, and histidine 452.

This sequence belongs to the 6-phosphogluconate dehydrogenase family. As to quaternary structure, homodimer.

The enzyme catalyses 6-phospho-D-gluconate + NADP(+) = D-ribulose 5-phosphate + CO2 + NADPH. The protein operates within carbohydrate degradation; pentose phosphate pathway; D-ribulose 5-phosphate from D-glucose 6-phosphate (oxidative stage): step 3/3. Catalyzes the oxidative decarboxylation of 6-phosphogluconate to ribulose 5-phosphate and CO(2), with concomitant reduction of NADP to NADPH. In Chlamydia pneumoniae (Chlamydophila pneumoniae), this protein is 6-phosphogluconate dehydrogenase, decarboxylating (gnd).